The following is a 434-amino-acid chain: MQVSVETTQGLGRRVTITVAADSIEKAVKSELVKAAKNVRIDGFRKGHVPMNIVEQRYGASVRQDVLGDLMQRNFVDAIIKEKINPAGAPNYVPGQYKEGEDFTYSVEFEVYPEVELKDLESIEVEKPVVEVNDADVDTMLETLRKQQATWKETDAAATAEDRATLDFTGSIDGEVFEGGKATDFVLAMGQGRMIPGFEEGVIGHKAGEEFTIDVNFPEDYHAENLKGKSAKFDIVLKKVEVRELPELTEEFIKRFGVADGSVAGLRAEVRKNMERELKGAVRNRVKTQAIDGLVSANEIDVPAALVEGEIDVLRRQAAQRFGGNEKQAAELPRELFEEQAKRRVVVGLLLGEVISQHELKADEDRVKALIEEMASAYEDPQEVIEFYSKNKELMNNMRNVALEEQAVETLLSKAKVTEKPTTFSELMNQTTTA.

Residues glutamate 161–proline 246 enclose the PPIase FKBP-type domain.

Belongs to the FKBP-type PPIase family. Tig subfamily.

Its subcellular location is the cytoplasm. It carries out the reaction [protein]-peptidylproline (omega=180) = [protein]-peptidylproline (omega=0). Functionally, involved in protein export. Acts as a chaperone by maintaining the newly synthesized protein in an open conformation. Functions as a peptidyl-prolyl cis-trans isomerase. The protein is Trigger factor of Yersinia enterocolitica serotype O:8 / biotype 1B (strain NCTC 13174 / 8081).